A 417-amino-acid polypeptide reads, in one-letter code: Leucine-rich repeat-containing protein 42 (417 aa).

4 LRR repeats span residues 167-188 (CLRS…LEHL), 195-215 (SLTE…RKMT), 227-249 (ALKV…FLFG), and 252-273 (LLQF…VKKI). The disordered stretch occupies residues 360–399 (FFRPEEQKDSDSSKSDKRQRSTKRTGADPGQEDCTIAPAT). Residues 362 to 378 (RPEEQKDSDSSKSDKRQ) show a composition bias toward basic and acidic residues.

The protein belongs to the LRRC42 family.

The sequence is that of Leucine-rich repeat-containing protein 42 (lrrc42) from Xenopus tropicalis (Western clawed frog).